Reading from the N-terminus, the 249-residue chain is Undecaprenyl-diphosphatase (249 aa).

8 consecutive transmembrane segments (helical) span residues 11–31 (GLTE…TAIF), 35–55 (PDVG…LIFV), 80–100 (LVLS…FIES), 101–121 (VFSS…LMLL), 135–155 (IPYL…LPGI), 180–200 (FLMS…KVAF), 202–222 (TEQI…LYLV), and 226–246 (VIGG…FFVL).

Belongs to the UppP family.

It is found in the cell membrane. It carries out the reaction di-trans,octa-cis-undecaprenyl diphosphate + H2O = di-trans,octa-cis-undecaprenyl phosphate + phosphate + H(+). Its function is as follows. Catalyzes the dephosphorylation of undecaprenyl diphosphate (UPP). This chain is Undecaprenyl-diphosphatase, found in Methanococcus maripaludis (strain C6 / ATCC BAA-1332).